The following is a 36-amino-acid chain: Potassium channel toxin alpha-KTx 6.14 (36 aa).

4 disulfides stabilise this stretch: C5-C25, C11-C30, C15-C32, and C20-C35.

As to expression, expressed by the venom gland.

It localises to the secreted. Its function is as follows. Blocks Shaker B channels expressed in Sf9 cells, with a dissociation constant of 52 nM. In Hoffmannihadrurus gertschi (Scorpion), this protein is Potassium channel toxin alpha-KTx 6.14.